The sequence spans 496 residues: Cytochrome P450 71D179 (496 aa).

A helical; Signal-anchor for type II membrane protein transmembrane segment spans residues 1 to 21 (MDISISWVVIIVSVLSYLILM). Position 435 (Cys435) interacts with heme.

It belongs to the cytochrome P450 family. Requires heme as cofactor.

The protein resides in the membrane. It functions in the pathway secondary metabolite biosynthesis; terpenoid biosynthesis. Its function is as follows. Involved in the biosynthesis of phenolic monoterpenes natural products thymol and carvacrol which have a broad range of biological activities acting as antimicrobial compounds, insecticides, antioxidants and pharmaceutical agents. Catalyzes probably the C3-hydroxylation of gamma-terpinene to produce thymol. This is Cytochrome P450 71D179 from Thymus vulgaris (Thyme).